The following is a 94-amino-acid chain: Large ribosomal subunit protein uL23 (94 aa).

It belongs to the universal ribosomal protein uL23 family. In terms of assembly, part of the 50S ribosomal subunit. Contacts protein L29, and trigger factor when it is bound to the ribosome.

Functionally, one of the early assembly proteins it binds 23S rRNA. One of the proteins that surrounds the polypeptide exit tunnel on the outside of the ribosome. Forms the main docking site for trigger factor binding to the ribosome. The chain is Large ribosomal subunit protein uL23 from Mycoplasma mycoides subsp. mycoides SC (strain CCUG 32753 / NCTC 10114 / PG1).